The sequence spans 585 residues: Arginine--tRNA ligase (585 aa).

The 'HIGH' region motif lies at Ala-131–His-141.

It belongs to the class-I aminoacyl-tRNA synthetase family. Monomer.

The protein resides in the cytoplasm. It catalyses the reaction tRNA(Arg) + L-arginine + ATP = L-arginyl-tRNA(Arg) + AMP + diphosphate. This chain is Arginine--tRNA ligase, found in Rhizobium etli (strain ATCC 51251 / DSM 11541 / JCM 21823 / NBRC 15573 / CFN 42).